We begin with the raw amino-acid sequence, 633 residues long: uncharacterized protein (633 aa).

This is an uncharacterized protein from Acanthamoeba polyphaga mimivirus (APMV).